Here is a 556-residue protein sequence, read N- to C-terminus: Zinc finger protein GLI1 (556 aa).

Disordered regions lie at residues 57–83 (TEHP…KKRA), 133–178 (SLGY…TPAR), and 200–222 (KYPE…QDPL). Residues 135–148 (GYQNPPGQQKGQGQ) are compositionally biased toward low complexity. 5 consecutive C2H2-type zinc fingers follow at residues 247 to 272 (TNCY…NNEH), 280 to 307 (FVCH…MRRH), 313 to 337 (HKCT…LRSH), 343 to 368 (YVCE…NRTH), and 374 to 399 (YICK…KTVH). The interval 295–303 (KAQYMLVVH) is interaction with DNA. Interaction with DNA regions lie at residues 357–362 (ASDRAK) and 387–393 (DPSSLRK). A disordered region spans residues 387-492 (DPSSLRKHVK…VEMTGNTGGS (106 aa)). Residues 454-472 (SKPQPSPGGQSSCSSDRSP) are compositionally biased toward low complexity.

It belongs to the GLI C2H2-type zinc-finger protein family.

It is found in the cytoplasm. Its subcellular location is the nucleus. Functionally, acts as a transcriptional activator. Binds to the DNA consensus sequence 5'-GACCACCCA-3'. May regulate the transcription of specific genes during normal development. May play a role in craniofacial development and digital development, as well as development of the central nervous system and gastrointestinal tract. Mediates SHH signaling. Plays a role in cell proliferation and differentiation via its role in SHH signaling. The sequence is that of Zinc finger protein GLI1 (GLI1) from Gallus gallus (Chicken).